Here is a 374-residue protein sequence, read N- to C-terminus: Chaperone protein DnaJ (374 aa).

The 66-residue stretch at 5-70 (DYYEVLGVER…SKRAAYDQYG (66 aa)) folds into the J domain. A CR-type zinc finger spans residues 133-211 (GTTVNIRVPT…CHGEGRVEEY (79 aa)). The Zn(2+) site is built by cysteine 146, cysteine 149, cysteine 163, cysteine 166, cysteine 185, cysteine 188, cysteine 199, and cysteine 202. CXXCXGXG motif repeat units lie at residues 146–153 (CKPCDGSG), 163–170 (CPTCGGIG), 185–192 (CPRCHGQG), and 199–206 (CDSCHGEG).

The protein belongs to the DnaJ family. As to quaternary structure, homodimer. Zn(2+) serves as cofactor.

The protein localises to the cytoplasm. In terms of biological role, participates actively in the response to hyperosmotic and heat shock by preventing the aggregation of stress-denatured proteins and by disaggregating proteins, also in an autonomous, DnaK-independent fashion. Unfolded proteins bind initially to DnaJ; upon interaction with the DnaJ-bound protein, DnaK hydrolyzes its bound ATP, resulting in the formation of a stable complex. GrpE releases ADP from DnaK; ATP binding to DnaK triggers the release of the substrate protein, thus completing the reaction cycle. Several rounds of ATP-dependent interactions between DnaJ, DnaK and GrpE are required for fully efficient folding. Also involved, together with DnaK and GrpE, in the DNA replication of plasmids through activation of initiation proteins. The polypeptide is Chaperone protein DnaJ (Pseudomonas fluorescens (strain ATCC BAA-477 / NRRL B-23932 / Pf-5)).